Here is a 426-residue protein sequence, read N- to C-terminus: Alpha/beta hydrolase pydG (426 aa).

The protein belongs to the AB hydrolase superfamily. In terms of assembly, homodimer.

Its pathway is mycotoxin biosynthesis. Its function is as follows. Alpha/beta hydrolasee; part of the gene cluster that mediates the biosynthesis of pyrrocidines, fungal natural products containing a macrocyclic para-cyclophane connected to a decahydrofluorene ring system that show potent antibiotic activities toward Gram-negative bacteria. Within the pathway, pydG catalyzes the Knoevenagel condensation that affords the 3-pyrrolin-2-one ring, using as substrate the polyketide-tyrosyl acyl thioester product of pydA. The pathway begins with the PKS-NRPS pydA which, with the help of the trans-enoyl reductase pydC, synthesizes the polyketide-tyrosyl acyl thioester product which can be reductively off-loaded by the terminal reductase (R) domain in pydA. The alpha/beta hydrolase pydG is then required to catalyze the subsequent Knoevenagel condensation that affords the 3-pyrrolin-2-one ring, whereas the four proteins pydB, pydE, pydX and pydZ then function synergistically to form the cyclophane. PydB and the membrane-bound pydX and pydZ are lipid-binding proteins that can sequester and mold the pdyG product into the inverse S-shape. Binding of the medium chain reductase pydE to the complex would trigger the cascade oxidative cyclization. PydY is involved in the Diels-Alder cycloaddition that forms the decahydrofluorene core. Additional non-enzymatic hydroxylation yields pyrrocidine A2 which can be further reduced into pyrrocidine B by an endogenous reductase. This Acremonium sp protein is Alpha/beta hydrolase pydG.